The chain runs to 502 residues: Cytochrome P450 2J2 (502 aa).

A heme-binding site is contributed by cysteine 448.

It belongs to the cytochrome P450 family. It depends on heme as a cofactor. Highly expressed in heart, present at lower levels in liver, kidney and skeletal muscle (at protein level).

The protein resides in the endoplasmic reticulum membrane. It is found in the microsome membrane. The catalysed reaction is (5Z,8Z,11Z,14Z)-eicosatetraenoate + reduced [NADPH--hemoprotein reductase] + O2 = 5,6-epoxy-(8Z,11Z,14Z)-eicosatrienoate + oxidized [NADPH--hemoprotein reductase] + H2O + H(+). The enzyme catalyses (5Z,8Z,11Z,14Z)-eicosatetraenoate + reduced [NADPH--hemoprotein reductase] + O2 = (8R,9S)-epoxy-(5Z,11Z,14Z)-eicosatrienoate + oxidized [NADPH--hemoprotein reductase] + H2O + H(+). It carries out the reaction (5Z,8Z,11Z,14Z)-eicosatetraenoate + reduced [NADPH--hemoprotein reductase] + O2 = (8S,9R)-epoxy-(5Z,11Z,14Z)-eicosatrienoate + oxidized [NADPH--hemoprotein reductase] + H2O + H(+). It catalyses the reaction (5Z,8Z,11Z,14Z)-eicosatetraenoate + reduced [NADPH--hemoprotein reductase] + O2 = (11R,12S)-epoxy-(5Z,8Z,14Z)-eicosatrienoate + oxidized [NADPH--hemoprotein reductase] + H2O + H(+). The catalysed reaction is (5Z,8Z,11Z,14Z)-eicosatetraenoate + reduced [NADPH--hemoprotein reductase] + O2 = (11S,12R)-epoxy-(5Z,8Z,14Z)-eicosatrienoate + oxidized [NADPH--hemoprotein reductase] + H2O + H(+). The enzyme catalyses (5Z,8Z,11Z,14Z)-eicosatetraenoate + reduced [NADPH--hemoprotein reductase] + O2 = (14R,15S)-epoxy-(5Z,8Z,11Z)-eicosatrienoate + oxidized [NADPH--hemoprotein reductase] + H2O + H(+). It carries out the reaction (5Z,8Z,11Z,14Z)-eicosatetraenoate + reduced [NADPH--hemoprotein reductase] + O2 = (14S,15R)-epoxy-(5Z,8Z,11Z)-eicosatrienoate + oxidized [NADPH--hemoprotein reductase] + H2O + H(+). It catalyses the reaction (15S)-hydroperoxy-(5Z,8Z,11Z,13E)-eicosatetraenoate = (13S)-hydroxy-(14S,15S)-epoxy-(5Z,8Z,11Z)-eicosatrienoate. The catalysed reaction is (15S)-hydroperoxy-(5Z,8Z,11Z,13E)-eicosatetraenoate = (13R)-hydroxy-(14S,15S)-epoxy-(5Z,8Z,11Z)-eicosatrienoate. The enzyme catalyses (5Z,8Z,11Z,14Z,17Z)-eicosapentaenoate + reduced [NADPH--hemoprotein reductase] + O2 = (17R,18S)-epoxy-(5Z,8Z,11Z,14Z)-eicosatetraenoate + oxidized [NADPH--hemoprotein reductase] + H2O + H(+). It carries out the reaction (5Z,8Z,11Z,14Z,17Z)-eicosapentaenoate + reduced [NADPH--hemoprotein reductase] + O2 = (17S,18R)-epoxy-(5Z,8Z,11Z,14Z)-eicosatetraenoate + oxidized [NADPH--hemoprotein reductase] + H2O + H(+). It catalyses the reaction (4Z,7Z,10Z,13Z,16Z,19Z)-docosahexaenoate + reduced [NADPH--hemoprotein reductase] + O2 = (19R,20S)-epoxy-(4Z,7Z,10Z,13Z,16Z)-docosapentaenoate + oxidized [NADPH--hemoprotein reductase] + H2O + H(+). The catalysed reaction is (4Z,7Z,10Z,13Z,16Z,19Z)-docosahexaenoate + reduced [NADPH--hemoprotein reductase] + O2 = (19S,20R)-epoxy-(4Z,7Z,10Z,13Z,16Z)-docosapentaenoate + oxidized [NADPH--hemoprotein reductase] + H2O + H(+). The enzyme catalyses albendazole + reduced [NADPH--hemoprotein reductase] + O2 = hydroxyalbendazole + oxidized [NADPH--hemoprotein reductase] + H2O + H(+). It carries out the reaction albendazole + reduced [NADPH--hemoprotein reductase] + O2 = albendazole S-oxide + oxidized [NADPH--hemoprotein reductase] + H2O + H(+). It catalyses the reaction fenbendazole + reduced [NADPH--hemoprotein reductase] + O2 = fenbendazole S-oxide + oxidized [NADPH--hemoprotein reductase] + H2O + H(+). It functions in the pathway lipid metabolism; arachidonate metabolism. Its function is as follows. A cytochrome P450 monooxygenase involved in the metabolism of polyunsaturated fatty acids (PUFA) in the cardiovascular system. Mechanistically, uses molecular oxygen inserting one oxygen atom into a substrate, and reducing the second into a water molecule, with two electrons provided by NADPH via cytochrome P450 reductase (NADPH--hemoprotein reductase). Catalyzes the epoxidation of double bonds of PUFA. Converts arachidonic acid to four regioisomeric epoxyeicosatrienoic acids (EpETrE), likely playing a major role in the epoxidation of endogenous cardiac arachidonic acid pools. In endothelial cells, participates in eicosanoids metabolism by converting hydroperoxide species into hydroxy epoxy metabolites. In combination with 15-lipoxygenase metabolizes arachidonic acid and converts hydroperoxyicosatetraenoates (HpETEs) into hydroxy epoxy eicosatrienoates (HEETs), which are precursors of vasodilatory trihydroxyicosatrienoic acids (THETAs). This hydroperoxide isomerase activity is NADPH- and O2-independent. Catalyzes the monooxygenation of a various xenobiotics, such as danazol, amiodarone, terfenadine, astemizole, thioridazine, tamoxifen, cyclosporin A and nabumetone. Catalyzes hydroxylation of the anthelmintics albendazole and fenbendazole. Catalyzes the sulfoxidation of fenbedazole. In Homo sapiens (Human), this protein is Cytochrome P450 2J2.